Reading from the N-terminus, the 592-residue chain is Bifunctional purine biosynthesis protein ADE17 (592 aa).

An MGS-like domain is found at 1–147 (MANYTKTAIL…KNHARVTILS (147 aa)). Residues 35 to 38 (SGGT), 65 to 68 (RVKT), 102 to 103 (CN), and 126 to 127 (DI) each bind IMP. Residue lysine 138 is the Proton donor/acceptor; for FAICAR cyclization activity of the active site. Residues 206-207 (RY), histidine 267, glycine 315, aspartate 338, asparagine 430, and arginine 450 contribute to the 5-amino-1-(5-phospho-beta-D-ribosyl)imidazole-4-carboxamide site. Catalysis depends on histidine 267, which acts as the Proton acceptor; for AICAR formyltransferase activity. Residue isoleucine 451 participates in (6R)-10-formyltetrahydrofolate binding. Phenylalanine 541 is a binding site for 5-amino-1-(5-phospho-beta-D-ribosyl)imidazole-4-carboxamide. Residues aspartate 546 and 565–566 (SV) each bind (6R)-10-formyltetrahydrofolate. Arginine 588 is a binding site for 5-amino-1-(5-phospho-beta-D-ribosyl)imidazole-4-carboxamide.

This sequence belongs to the PurH family. In terms of assembly, homodimer.

Its subcellular location is the cytoplasm. The protein localises to the cytosol. It catalyses the reaction (6R)-10-formyltetrahydrofolate + 5-amino-1-(5-phospho-beta-D-ribosyl)imidazole-4-carboxamide = 5-formamido-1-(5-phospho-D-ribosyl)imidazole-4-carboxamide + (6S)-5,6,7,8-tetrahydrofolate. The enzyme catalyses IMP + H2O = 5-formamido-1-(5-phospho-D-ribosyl)imidazole-4-carboxamide. Its pathway is purine metabolism; IMP biosynthesis via de novo pathway; 5-formamido-1-(5-phospho-D-ribosyl)imidazole-4-carboxamide from 5-amino-1-(5-phospho-D-ribosyl)imidazole-4-carboxamide (10-formyl THF route): step 1/1. It participates in purine metabolism; IMP biosynthesis via de novo pathway; IMP from 5-formamido-1-(5-phospho-D-ribosyl)imidazole-4-carboxamide: step 1/1. Its function is as follows. Bifunctional enzyme that catalyzes the last two steps of purine biosynthesis. Acts as a transformylase that incorporates a formyl group to the AMP analog AICAR (5-amino-1-(5-phospho-beta-D-ribosyl)imidazole-4-carboxamide) to produce the intermediate formyl-AICAR (FAICAR). Also catalyzes the cyclization of FAICAR to IMP. The polypeptide is Bifunctional purine biosynthesis protein ADE17 (Saccharomyces cerevisiae (strain ATCC 204508 / S288c) (Baker's yeast)).